The following is a 229-amino-acid chain: MKIKAPVITIDGPSGSGKGTVAGLLAKKLGWCLLDSGALYRLLAFAARNHGVDLTNEEALKLLAAHLDVQFETTAAGQGQRIILEGEDVTQAIRNEQIGSGASQVASLPAVRDALLMRQRAFQEEPGLVADGRDMGTVVFPDAPLKVFLTASAEERARRRYLQLKAKGDDVSLSSLLDEICARDERDTQRAVAPLKPAHDAIQLDSTELSIEQVLERILSEIALRDIAG.

12-20 is an ATP binding site; it reads GPSGSGKGT.

This sequence belongs to the cytidylate kinase family. Type 1 subfamily.

The protein resides in the cytoplasm. It carries out the reaction CMP + ATP = CDP + ADP. The catalysed reaction is dCMP + ATP = dCDP + ADP. The chain is Cytidylate kinase from Pseudomonas syringae pv. tomato (strain ATCC BAA-871 / DC3000).